The chain runs to 103 residues: Non-histone chromosomal protein HMG-14B (103 aa).

Residues 1-103 are disordered; it reads MPKRKVAASR…AVEKEEVKSE (103 aa). The segment covering 29–50 has biased composition (basic and acidic residues); that stretch reads VPDKAEPKAKALAAKDKSENKK. Basic residues predominate over residues 51-60; that stretch reads AQSKGKKGPK. A compositionally biased stretch (basic and acidic residues) spans 94-103; the sequence is AVEKEEVKSE.

This sequence belongs to the HMGN family.

Its subcellular location is the nucleus. Binds to the inner side of the nucleosomal DNA thus altering the interaction between the DNA and the histone octamer. May be involved in the process which maintains transcribable genes in a unique chromatin conformation. The chain is Non-histone chromosomal protein HMG-14B (HMG14) from Gallus gallus (Chicken).